We begin with the raw amino-acid sequence, 594 residues long: Elongation factor 4 (594 aa).

In terms of domain architecture, tr-type G spans 2–184 (KNIRNFSIIA…TIVAKVPAPE (183 aa)). GTP-binding positions include 14 to 19 (DHGKST) and 131 to 134 (NKID).

The protein belongs to the TRAFAC class translation factor GTPase superfamily. Classic translation factor GTPase family. LepA subfamily.

Its subcellular location is the cell inner membrane. It carries out the reaction GTP + H2O = GDP + phosphate + H(+). In terms of biological role, required for accurate and efficient protein synthesis under certain stress conditions. May act as a fidelity factor of the translation reaction, by catalyzing a one-codon backward translocation of tRNAs on improperly translocated ribosomes. Back-translocation proceeds from a post-translocation (POST) complex to a pre-translocation (PRE) complex, thus giving elongation factor G a second chance to translocate the tRNAs correctly. Binds to ribosomes in a GTP-dependent manner. This chain is Elongation factor 4, found in Francisella philomiragia subsp. philomiragia (strain ATCC 25017 / CCUG 19701 / FSC 153 / O#319-036).